Here is a 2785-residue protein sequence, read N- to C-terminus: Testis-expressed protein 15 (2785 aa).

Over residues 262 to 274 (SSSFPSSLSNAFS) the composition is skewed to low complexity. Disordered stretches follow at residues 262 to 331 (SSSF…PSSD), 596 to 620 (EQRDDKNPNEAKEHNTDNINGSEKQ), 661 to 683 (NGKPAETASSESEAVEQRHAPND), 904 to 924 (TESTEPETNKEGNASGFGMCS), 943 to 1064 (VQES…QGRI), 2276 to 2458 (NRQE…TNDK), 2470 to 2511 (DIDA…LVPD), and 2571 to 2601 (TQPIKSESPKKSMTDAPNPNTAPFGSYGNSA). Residues 275–286 (DVRKQKHSEEQV) are compositionally biased toward basic and acidic residues. Residues 314–331 (TCSNDSQGHFSQESPSSD) are compositionally biased toward polar residues. Residues 596–611 (EQRDDKNPNEAKEHNT) are compositionally biased toward basic and acidic residues. Polar residues-rich tracts occupy residues 962–989 (HNTHVDQGSGKPNNDSLSTEPSNVTVMN) and 1021–1031 (HASSSRGQNIA). Positions 1033–1042 (KDLREHETHE) are enriched in basic and acidic residues. Polar residues-rich tracts occupy residues 1049-1064 (SHGSSDRFSSLSQGRI), 2291-2314 (DSSQPGVSEQTPPGTECTVKNISD), 2327-2338 (EVSQGKGNTDTV), 2353-2387 (NIQTVSKHPSTTGSPPNDENKIGSNSSDSLKSISA), 2394-2415 (RQSSVLGSVSPAESVQDTCTPK), 2431-2454 (ASLTEQQENSNVIEKRNGNSSVAE), 2491-2502 (DHTQISPSNLTA), and 2585-2601 (DAPNPNTAPFGSYGNSA).

The protein belongs to the TEX15 family. Interacts with PIWIL4. Interacts with PIWIL2. As to expression, detected in testis and ovary, and at lower levels in lung and brain.

It localises to the cytoplasm. The protein localises to the nucleus. Required during spermatogenesis for normal chromosome synapsis and meiotic recombination in germ cells. Necessary for formation of DMC1 and RAD51 foci on meiotic chromosomes, suggesting a specific role in DNA double-stranded break repair. Essential executor of PIWIL4-piRNA pathway directed transposon DNA methylation and silencing in the male embryonic germ cells. PIWIL4-piRNA binds to nascent transposon transcripts and interacts with TEX15, which may in turn recruit the epigenetic silencing machinery to the transposon loci. Not required for piRNA biosynthesis. The protein is Testis-expressed protein 15 of Mus musculus (Mouse).